The primary structure comprises 468 residues: 6-phospho-beta-galactosidase (468 aa).

D-galactose 6-phosphate contacts are provided by Gln-19, His-116, Asn-159, Glu-160, and Asn-297. The active-site Proton donor is Glu-160. Glu-375 acts as the Nucleophile in catalysis. Residues Ser-428, Trp-429, Lys-435, and Tyr-437 each contribute to the D-galactose 6-phosphate site.

It belongs to the glycosyl hydrolase 1 family.

The catalysed reaction is a 6-phospho-beta-D-galactoside + H2O = D-galactose 6-phosphate + an alcohol. The protein operates within carbohydrate metabolism; lactose degradation; D-galactose 6-phosphate and beta-D-glucose from lactose 6-phosphate: step 1/1. The sequence is that of 6-phospho-beta-galactosidase from Streptococcus pyogenes serotype M4 (strain MGAS10750).